Reading from the N-terminus, the 28-residue chain is Trypsin inhibitor A (28 aa).

Cystine bridges form between Cys-3/Cys-20, Cys-10/Cys-22, and Cys-16/Cys-27.

This sequence belongs to the protease inhibitor I7 (squash-type serine protease inhibitor) family.

Its subcellular location is the secreted. Functionally, inhibits trypsin. In Momordica charantia (Bitter gourd), this protein is Trypsin inhibitor A.